The primary structure comprises 341 residues: MKYLFFALCLYLYQGISEAEVPAEQIPLEAQALSGLPLVEYLQKNQRLFEVTATPVPYFKQRLMDLKYIDQNNIPDEEVEDEELEENNDDIPESYDPRIQWANCSSLFHIPDQANCGSCWAVSSAAAMSDRICIASKGAKQVLISAQDVVSCCTWCGDGCEGGWPISAFRFHADEGVVTGGDYNTKGSCRPYEIHPCGHHGNETYYGECVGMADTPRCKRRCLLGYPKSYPSDRYYKKAYQLKNSVKAIQKDIMKNGPVVATYTVYEDFAHYRSGIYKHKAGRKTGLHAVKVIGWGEEKGTPYWIVANSWHDDWGENGFFRMHRGSNDCGFEERMAAGSVQ.

The first 19 residues, 1-19 (MKYLFFALCLYLYQGISEA), serve as a signal peptide directing secretion. Positions 20–88 (EVPAEQIPLE…VEDEELEENN (69 aa)) are cleaved as a propeptide — activation peptide. Asparagine 103 carries N-linked (GlcNAc...) asparagine glycosylation. Disulfide bonds link cysteine 104–cysteine 133, cysteine 116–cysteine 160, cysteine 152–cysteine 218, cysteine 153–cysteine 156, cysteine 189–cysteine 222, and cysteine 197–cysteine 209. The active site involves cysteine 119. Asparagine 202 is a glycosylation site (N-linked (GlcNAc...) asparagine). Residues histidine 288 and asparagine 308 contribute to the active site.

The protein belongs to the peptidase C1 family.

In terms of biological role, expression of the protease correlates with blood-feeding and suggests a role for the protease in blood digestion. This is Cathepsin B-like cysteine proteinase 1 (CP-1) from Ostertagia ostertagi (Brown stomach worm).